The chain runs to 373 residues: tRNA N6-adenosine threonylcarbamoyltransferase (373 aa).

His-133, His-137, and Tyr-154 together coordinate a divalent metal cation. Residues 154–158 (YVSGG), Asp-186, Gly-201, Glu-205, and Asn-302 contribute to the substrate site. Asp-331 is an a divalent metal cation binding site.

Belongs to the KAE1 / TsaD family. Component of the EKC/KEOPS complex composed of at least BUD32, CGI121, GON7, KAE1 and PCC1; the whole complex dimerizes. The cofactor is a divalent metal cation.

The protein resides in the cytoplasm. The protein localises to the nucleus. It carries out the reaction L-threonylcarbamoyladenylate + adenosine(37) in tRNA = N(6)-L-threonylcarbamoyladenosine(37) in tRNA + AMP + H(+). Its function is as follows. Component of the EKC/KEOPS complex that is required for the formation of a threonylcarbamoyl group on adenosine at position 37 (t(6)A37) in tRNAs that read codons beginning with adenine. The complex is probably involved in the transfer of the threonylcarbamoyl moiety of threonylcarbamoyl-AMP (TC-AMP) to the N6 group of A37. KAE1 likely plays a direct catalytic role in this reaction, but requires other protein(s) of the complex to fulfill this activity. The EKC/KEOPS complex also promotes both telomere uncapping and telomere elongation. The complex is required for efficient recruitment of transcriptional coactivators. The chain is tRNA N6-adenosine threonylcarbamoyltransferase from Debaryomyces hansenii (strain ATCC 36239 / CBS 767 / BCRC 21394 / JCM 1990 / NBRC 0083 / IGC 2968) (Yeast).